The following is a 517-amino-acid chain: GMP synthase [glutamine-hydrolyzing] (517 aa).

The Glutamine amidotransferase type-1 domain maps to 11–202 (KIIVLDFGSQ…AFKVCGAKAN (192 aa)). Cys88 (nucleophile) is an active-site residue. Residues His176 and Glu178 contribute to the active site. Residues 203 to 392 (WTMDDFIEMQ…LGIPHDLVWR (190 aa)) enclose the GMPS ATP-PPase domain. An ATP-binding site is contributed by 230-236 (SGGVDSS).

In terms of assembly, homodimer.

It catalyses the reaction XMP + L-glutamine + ATP + H2O = GMP + L-glutamate + AMP + diphosphate + 2 H(+). It functions in the pathway purine metabolism; GMP biosynthesis; GMP from XMP (L-Gln route): step 1/1. Functionally, catalyzes the synthesis of GMP from XMP. The polypeptide is GMP synthase [glutamine-hydrolyzing] (Lactobacillus johnsonii (strain CNCM I-12250 / La1 / NCC 533)).